The chain runs to 254 residues: Homeobox protein Dlx4b (254 aa).

The homeobox DNA-binding region spans Ile129–Met188.

The protein belongs to the distal-less homeobox family.

The protein resides in the nucleus. During larvae development, may be important for neurocranium morphogenesis. In Danio rerio (Zebrafish), this protein is Homeobox protein Dlx4b (dlx4b).